A 122-amino-acid polypeptide reads, in one-letter code: Large ribosomal subunit protein uL14 (122 aa).

The protein belongs to the universal ribosomal protein uL14 family. As to quaternary structure, part of the 50S ribosomal subunit. Forms a cluster with proteins L3 and L19. In the 70S ribosome, L14 and L19 interact and together make contacts with the 16S rRNA in bridges B5 and B8.

Functionally, binds to 23S rRNA. Forms part of two intersubunit bridges in the 70S ribosome. This Hyphomonas neptunium (strain ATCC 15444) protein is Large ribosomal subunit protein uL14.